A 468-amino-acid chain; its full sequence is Tripartite motif-containing protein 75 (468 aa).

Residues 16–57 (CSICLDYLSDPVTIECGHNFCRSCIQQSWLDLQELFPCPVCR) form an RING-type zinc finger. A B box-type zinc finger spans residues 92–133 (EETTLCEKHNQPLSVFCKEDLMVLCPLCTQPPDHQGHHVRPI). Residues Cys97, His100, Cys119, and His125 each coordinate Zn(2+). The stretch at 170–222 (LELREMVENQRQELSSEFEHLNQFLDREQQAVLSRLAEEEKDNQQKLSANITA) forms a coiled coil. Residues 276–468 (CSFPPQYSAL…LRICTGTVCE (193 aa)) form the B30.2/SPRY domain.

Belongs to the TRIM/RBCC family.

The protein localises to the cytoplasm. Its subcellular location is the cytoskeleton. It is found in the spindle. Functionally, may play a role in female meiosis. The polypeptide is Tripartite motif-containing protein 75 (Homo sapiens (Human)).